We begin with the raw amino-acid sequence, 498 residues long: uncharacterized protein (498 aa).

11 helical membrane-spanning segments follow: residues 54 to 74 (LLKM…MAFL), 100 to 120 (VAVS…VVLV), 128 to 148 (MLAF…FMSS), 150 to 170 (GGLI…FPAL), 188 to 208 (SYLF…AYAL), 221 to 241 (WIYI…LFAL), 302 to 322 (VLYG…FVGL), 326 to 346 (YMTI…AWLS), 353 to 373 (AVYL…MLAS), 381 to 401 (TATY…LGWL), and 446 to 466 (AFTL…FFSL).

It belongs to the major facilitator superfamily. Allantoate permease family.

Its subcellular location is the membrane. This is an uncharacterized protein from Schizosaccharomyces pombe (strain 972 / ATCC 24843) (Fission yeast).